The following is a 176-amino-acid chain: ATP-dependent protease subunit HslV (176 aa).

T2 is a catalytic residue. G157, C160, and T163 together coordinate Na(+).

Belongs to the peptidase T1B family. HslV subfamily. In terms of assembly, a double ring-shaped homohexamer of HslV is capped on each side by a ring-shaped HslU homohexamer. The assembly of the HslU/HslV complex is dependent on binding of ATP.

The protein localises to the cytoplasm. It catalyses the reaction ATP-dependent cleavage of peptide bonds with broad specificity.. With respect to regulation, allosterically activated by HslU binding. In terms of biological role, protease subunit of a proteasome-like degradation complex believed to be a general protein degrading machinery. The chain is ATP-dependent protease subunit HslV from Escherichia coli O139:H28 (strain E24377A / ETEC).